A 301-amino-acid chain; its full sequence is MEDATEMSGGAEEFAEGSKINASKNQQDDGKMFIGGLSWDTSKKDLTEYLSRFGEVVDCTIKTDPVTGRSRGFGFVLFKDAASVEKVLELKEHKLDGKLIDPKRAKALKGKEPPKKVFVGGLSPDTSEEQIKEYFGAFGEIENIELPMDTKTNERRGFCFITYTDEEPVKKLLESRYHQIGSGKCEIKVAQPKEVYRQQQQQQKGGKSNASGGRGGGRGRGRGQGQNWNQGFNNYYDQGYGNYNSAYSDQSYSGYGGYDYSGYNYPNYGYGPGYTDYSGQQSTYGKASRGGGNHQNNYQPY.

The segment at 1 to 29 (MEDATEMSGGAEEFAEGSKINASKNQQDD) is disordered. RRM domains are found at residues 30–112 (GKMF…KGKE) and 115–194 (KKVF…QPKE). Disordered stretches follow at residues 194 to 230 (EVYR…NWNQ) and 269 to 301 (GYGP…YQPY). Residues 212–224 (GGRGGGRGRGRGQ) are compositionally biased toward gly residues.

Its subcellular location is the nucleus. It localises to the cytoplasm. In terms of biological role, acts as a transcriptional regulator. Binds DNA and RNA. The polypeptide is Heterogeneous nuclear ribonucleoprotein D-like (HNRNPDL) (Gallus gallus (Chicken)).